A 143-amino-acid polypeptide reads, in one-letter code: Hemoglobin subunit alpha (143 aa).

S2 is subject to N-acetylserine. The region spanning 2–143 (SLSDTDKAVV…LALALSEKYR (142 aa)) is the Globin domain. H60 is an O2 binding site. H89 serves as a coordination point for heme b.

The protein belongs to the globin family. As to quaternary structure, heterotetramer of two alpha chains and two beta chains. In terms of tissue distribution, red blood cells.

Its function is as follows. Involved in oxygen transport from gills to the various peripheral tissues. The chain is Hemoglobin subunit alpha (hbaa1) from Danio rerio (Zebrafish).